The following is a 172-amino-acid chain: DNA-directed RNA polymerase II subunit RPB7 (172 aa).

It belongs to the eukaryotic RPB7/RPC8 RNA polymerase subunit family. Component of the RNA polymerase II (Pol II) core complex consisting of 12 subunits: a ten-subunit catalytic core composed of POLR2A/RPB1, POLR2B/RPB2, POLR2C/RPB3, POLR2I/RPB9, POLR2J/RPB11, POLR2E/RPABC1, POLR2F/RPABC2, POLR2H/RPABC3, POLR2K/RPABC4 and POLR2L/RPABC5 and a mobile stalk composed of two subunits POLR2D/RPB4 and POLR2G/RPB7, protruding from the core and functioning primarily in transcription initiation. Part of Pol II(G) complex, in which Pol II core associates with an additional subunit POLR2M; unlike conventional Pol II, Pol II(G) functions as a transcriptional repressor. Part of TBP-based Pol II pre-initiation complex (PIC), in which Pol II core assembles with general transcription factors and other specific initiation factors including GTF2E1, GTF2E2, GTF2F1, GTF2F2, TCEA1, ERCC2, ERCC3, GTF2H2, GTF2H3, GTF2H4, GTF2H5, GTF2A1, GTF2A2, GTF2B and TBP; this large multi-subunit PIC complex mediates DNA unwinding and targets Pol II core to the transcription start site where the first phosphodiester bond forms.

The protein localises to the nucleus. Its function is as follows. Core component of RNA polymerase II (Pol II), a DNA-dependent RNA polymerase which synthesizes mRNA precursors and many functional non-coding RNAs using the four ribonucleoside triphosphates as substrates. Pol II is the central component of the basal RNA polymerase II transcription machinery. It is composed of mobile elements that move relative to each other. POLR2G/RPB7 is part of a subcomplex with POLR2D/RPB4 that binds to a pocket formed by POLR2A/RPB1, POLR2B/RPB2 and POLR2F/RPABC2 at the base of the clamp element. The POLR2D/RPB4-POLR2G/RPB7 subcomplex seems to lock the clamp via POLR2G/RPB7 in the closed conformation thus preventing double-stranded DNA to enter the active site cleft. The POLR2D/RPB4-POLR2G/RPB7 subcomplex binds single-stranded DNA and RNA. In Bos taurus (Bovine), this protein is DNA-directed RNA polymerase II subunit RPB7 (POLR2G).